We begin with the raw amino-acid sequence, 573 residues long: Probable pectinesterase/pectinesterase inhibitor 41 (573 aa).

The signal sequence occupies residues 1–22; that stretch reads MLSLKLFLVTLFLSLQTLFIAS. A pectinesterase inhibitor 41 region spans residues 25-184; it reads LLPSNSSSTI…TKLFSVSLAL (160 aa). N-linked (GlcNAc...) asparagine glycans are attached at residues asparagine 29, asparagine 119, asparagine 173, asparagine 264, asparagine 268, asparagine 281, and asparagine 320. Residues 259–557 form a pectinesterase 41 region; the sequence is VTVNQNGTGN…FTVENFLLGD (299 aa). Threonine 336 contacts substrate. Asparagine 353 carries an N-linked (GlcNAc...) asparagine glycan. Glutamine 366 is a binding site for substrate. The Proton donor; for pectinesterase activity role is filled by aspartate 389. Cysteine 403 and cysteine 423 are oxidised to a cystine. The active-site Nucleophile; for pectinesterase activity is aspartate 410. Asparagine 456 and asparagine 469 each carry an N-linked (GlcNAc...) asparagine glycan. Residues arginine 478 and tryptophan 480 each contribute to the substrate site. N-linked (GlcNAc...) asparagine glycans are attached at residues asparagine 520, asparagine 541, and asparagine 547.

This sequence in the N-terminal section; belongs to the PMEI family. The protein in the C-terminal section; belongs to the pectinesterase family. Expressed in flowers, siliques, floral stems and rosettes leaves.

Its subcellular location is the secreted. The protein localises to the cell wall. It catalyses the reaction [(1-&gt;4)-alpha-D-galacturonosyl methyl ester](n) + n H2O = [(1-&gt;4)-alpha-D-galacturonosyl](n) + n methanol + n H(+). It functions in the pathway glycan metabolism; pectin degradation; 2-dehydro-3-deoxy-D-gluconate from pectin: step 1/5. Acts in the modification of cell walls via demethylesterification of cell wall pectin. In Arabidopsis thaliana (Mouse-ear cress), this protein is Probable pectinesterase/pectinesterase inhibitor 41 (PME41).